Reading from the N-terminus, the 181-residue chain is Probable inactive acireductone dioxygenase 2 (181 aa).

The protein belongs to the acireductone dioxygenase (ARD) family.

The protein localises to the cytoplasm. It localises to the nucleus. In terms of biological role, probable inactive acireductone dioxygenase. The chain is Probable inactive acireductone dioxygenase 2 from Sorghum bicolor (Sorghum).